An 80-amino-acid chain; its full sequence is Large ribosomal subunit protein bL31B (80 aa).

Belongs to the bacterial ribosomal protein bL31 family. Type B subfamily. In terms of assembly, part of the 50S ribosomal subunit.

In Streptococcus thermophilus (strain CNRZ 1066), this protein is Large ribosomal subunit protein bL31B.